We begin with the raw amino-acid sequence, 47 residues long: Large ribosomal subunit protein eL40 (47 aa).

The protein belongs to the eukaryotic ribosomal protein eL40 family.

This Methanococcus vannielii (strain ATCC 35089 / DSM 1224 / JCM 13029 / OCM 148 / SB) protein is Large ribosomal subunit protein eL40.